A 312-amino-acid chain; its full sequence is ADIPOR-like receptor IZH4 (312 aa).

Positions 1–38 (MVSLTTIEQSPVKCETTTEKESNDTRGTDSNENAETKE) are disordered. Residues 1–64 (MVSLTTIEQS…YKNKSSRNES (64 aa)) are Cytoplasmic-facing. Residues 16-38 (TTTEKESNDTRGTDSNENAETKE) show a composition bias toward basic and acidic residues. The helical transmembrane segment at 65 to 85 (LVALIYLLGSMLSFCLLIFFT) threads the bilayer. At 86–101 (DFYLIPLFPTTTTMTD) the chain is on the lumenal side. Residues 102–122 (YIVFNFYLLNVFVFCMVHFIY) form a helical membrane-spanning segment. Residues 123–141 (HFVKNISLQQHLEHWQKFS) are Cytoplasmic-facing. A helical transmembrane segment spans residues 142-162 (YLSNINLLISSQITILYYLFY). Residues 163–165 (DYV) are Lumenal-facing. A helical membrane pass occupies residues 166–186 (FFFKIFTLLMNFIGLVAYFFI). The Cytoplasmic portion of the chain corresponds to 187–201 (LTDKLISSKRFNKTV). Residues 202-222 (FFISVSVVCCSLPLLTAIITF) traverse the membrane as a helical segment. Topologically, residues 223 to 231 (DGLENLKER) are lumenal. A helical transmembrane segment spans residues 232 to 252 (IKVNAITWELVALVAASIIYV). Residues 253–277 (TRFPESLFRRNKKEEGWNHSEYLFH) are Cytoplasmic-facing. A helical transmembrane segment spans residues 278-298 (LLISGTAFYHFFILIQSYILM). Over 299–312 (HSSLNQPELINFKS) the chain is Lumenal.

This sequence belongs to the ADIPOR family.

The protein resides in the endoplasmic reticulum membrane. Its function is as follows. ADIPOR-like receptor involved in zinc metabolism either by altering membrane sterol content or by directly altering cellular zinc levels. This Saccharomyces cerevisiae (strain ATCC 204508 / S288c) (Baker's yeast) protein is ADIPOR-like receptor IZH4 (IZH4).